The following is a 100-amino-acid chain: Large ribosomal subunit protein bL28 (100 aa).

Positions 1 to 25 (MTRRCDITGKSVLSGNNVSHANNKS) are disordered. The span at 11–22 (SVLSGNNVSHAN) shows a compositional bias: polar residues.

It belongs to the bacterial ribosomal protein bL28 family.

The polypeptide is Large ribosomal subunit protein bL28 (Acidiphilium cryptum (strain JF-5)).